The following is a 1346-amino-acid chain: Toll-like receptor Tollo (1346 aa).

An N-terminal signal peptide occupies residues 1–21; it reads MLATTHMLYVLIATCVIPIFG. The Extracellular segment spans residues 22–1021; the sequence is AALSKTVLYQ…NQPPKLDYIP (1000 aa). N-linked (GlcNAc...) asparagine glycans are attached at residues N63, N112, and N126. LRR repeat units lie at residues 97–120, 124–146, 151–174, 176–198, 209–232, 234–256, 257–280, 282–304, 306–330, 331–354, 355–378, 380–402, 404–426, 427–450, 452–473, 474–497, 498–521, 523–544, 546–568, 570–591, 593–614, 615–637, and 638–661; these read LVEL…SFRG, LRNL…MASN, FRQL…MVCP, KSLQ…YFSA, GSTL…MLSA, GRLT…AFEG, LLSL…LFAE, KQLQ…IFGE, AELL…TFVG, LKRL…IFRP, LASL…IFAD, TNLH…TLQG, KNLL…SLVN, CSQL…LAHV, LLKT…SITQ, LESL…VFDR, MSSL…SLQR, SQLQ…LFTE, PNLV…HIPI, LQWL…EIES, LSLS…SSIP, NSVE…TFFK, and KPNL…ALRL. Residue N182 is glycosylated (N-linked (GlcNAc...) asparagine). The N-linked (GlcNAc...) asparagine glycan is linked to N291. Residue N426 is glycosylated (N-linked (GlcNAc...) asparagine). N468 carries an N-linked (GlcNAc...) asparagine glycan. The N-linked (GlcNAc...) asparagine glycan is linked to N505. N-linked (GlcNAc...) asparagine glycosylation occurs at N552. Residue N640 is glycosylated (N-linked (GlcNAc...) asparagine). 4 disulfide bridges follow: C682/C710, C684/C733, C757/C763, and C761/C776. LRR repeat units follow at residues 790-813, 814-837, 838-861, 863-885, 887-909, and 912-938; these read PMDS…AFIG, RKRL…TFYG, LLEL…EFQG, DNLQ…TFTH, YHLK…NFLP, and LNEL…YINR. Residues N823 and N832 are each glycosylated (N-linked (GlcNAc...) asparagine). C924 and C950 form a disulfide bridge. N-linked (GlcNAc...) asparagine glycosylation is found at N956 and N1000. Residues 1022-1042 traverse the membrane as a helical segment; sequence ILVAILTAFIFVMICISLVFI. The Cytoplasmic segment spans residues 1043-1346; that stretch reads FRQEMRVWCH…PTPASRNLHM (304 aa). A TIR domain is found at 1074–1209; it reads KLFDAFVSYS…LFWQKLRFAL (136 aa). Positions 1235 to 1346 are disordered; it reads HHHHHVHQQA…PTPASRNLHM (112 aa). Low complexity predominate over residues 1267-1300; sequence PGSFRRQPSLHQQQQQQQQIRGNNNTTQQQQQQQ.

Belongs to the Toll-like receptor family. May interact (via the extracellular domain) with 18w (via the extracellular domain).

The protein resides in the cell membrane. Its subcellular location is the apical cell membrane. Functionally, toll-related receptor. Probably specific to larval innate immunity. Involved in the tracheal immune response of larvae to Gram-negative and perhaps Gram-positive bacteria; upon infection it negatively regulates the immune deficiency (Imd) signaling cascade specifically in the respiratory epithelium to prevent the overexpression of antimicrobial peptides (AMP). Involved in the NF-kappa-B-dependent apoptosis of unfit cells during cell competition. Involved in neuron-specific glycosylation. Positively controls the neuromuscular junction (NMJ) growth in presynaptic motorneurons, probably via the JNK pathway. During development of the peripheral nervous system, may function in the NF-kappa-B (rel) regulatory cascade to repress expression of the neuron-specific genes sc and ase in non-neuronal cells. Promotes heterophilic cell adhesion with 18w in vitro. May have a minor role in leg development. May be involved in determining the proximal cell fate in the wing, possibly by negatively regulating the Dpp signaling pathway. May also be involved in the Dpp signaling pathway in the eye. Possibly functions with 18w and Toll-6 during convergent extension, to help direct proper planar cell polarity, cell intercalation and axis elongation. This chain is Toll-like receptor Tollo, found in Drosophila melanogaster (Fruit fly).